The primary structure comprises 433 residues: MSRSTSTELQQELPASKEVPPDPTSIASSETASGSKPPSTEFTPRAILVLVGSFLVTFCSVGFTNAFGVFQTYYQEAFLSDKSSSDISWIGSFNIFCMFGCTFISGYLTDRYGPRLLICFGSLVMVFALFMLSLSTEYYQIFLTQAFLFGVGISFVLLPAMATVSLYFAKSRSLAMGIIVSGSSLGGVIWPIALDRLFNEVSFGWTVRIAAFIMLPLLGLACLAIRRPAEFANRPKPKADFSCVKNPVMIFLAIGLFLIFLGLFSPFFYVTSYMISLGKDSNLAFYMVSVVNASSLFGRILPGLIADRVGNYNVLFMVAVFSGLVACCWTKATSVGGIVVFSLAYGLASGAVISLQGPCAAQTVQREQFGVAMGVVMTFLSIAGLVGTPINGQILIPYGYLGLSLFSGLVMLLGSVFILLARLKIKTGLLVKA.

Composition is skewed to polar residues over residues 1 to 10 and 25 to 40; these read MSRSTSTELQ and SIAS…PPST. A disordered region spans residues 1–40; it reads MSRSTSTELQQELPASKEVPPDPTSIASSETASGSKPPST. 12 helical membrane-spanning segments follow: residues 47 to 67, 87 to 107, 116 to 136, 141 to 161, 174 to 194, 205 to 225, 248 to 268, 285 to 305, 309 to 329, 335 to 355, 370 to 390, and 401 to 421; these read ILVL…TNAF, ISWI…ISGY, LLIC…SLST, IFLT…LPAM, LAMG…PIAL, WTVR…CLAI, VMIF…SPFF, FYMV…PGLI, VGNY…ACCW, VGGI…VISL, GVAM…GTPI, and LGLS…ILLA.

This sequence belongs to the major facilitator superfamily. Monocarboxylate porter (TC 2.A.1.13) family.

The protein localises to the cell membrane. Efflux pump that may be involved in the secretion of agnestins, dihydroxy-xanthone metabolites. The chain is Agnestins efflux protein AgnL12 from Paecilomyces divaricatus (Penicillium divaricatum).